The sequence spans 192 residues: Cytochrome b-245 light chain (192 aa).

Topologically, residues 2–7 (GQIEWA) are cytoplasmic. A helical membrane pass occupies residues 8–30 (MWANEQALASGLILITGGIVATA). Residues 31–35 (GRFTQ) lie on the Extracellular side of the membrane. The helical transmembrane segment at 36–53 (WYFGAYSIVAGVLICLLE) threads the bilayer. At 54 to 69 (YPRGKRKKGSTMERCG) the chain is on the cytoplasmic side. An intramembrane segment occupies 70 to 80 (QKYLTAVVKLF). At 81 to 86 (GPLTRN) the chain is on the cytoplasmic side. A helical transmembrane segment spans residues 87–104 (YYVRAVLHLLLSVPAGFL). A topological domain (extracellular) is located at residue leucine 105. Residues 106 to 126 (ATILGTVCLAIASVIYLLAAI) form a helical membrane-spanning segment. At 127-192 (RGEQWTPIEP…NPIPVTDEVV (66 aa)) the chain is on the cytoplasmic side. Residues 134 to 192 (IEPKPKERPQVGGTIKQPPTNPPPRPPAEVRKKPSEAEEEAASAGGPQVNPIPVTDEVV) are disordered. Threonine 147 is modified (phosphothreonine). A Glycyl lysine isopeptide (Lys-Gly) (interchain with G-Cter in ubiquitin) cross-link involves residue lysine 149. Phosphoserine is present on residues serine 168 and serine 176.

Belongs to the p22phox family. In terms of assembly, component of the phagocyte NADPH oxidase core complex/cytochrome b558 complex, composed of CYBB (heavy chain (beta)) and CYBA (light chain (alpha)). Component of the phagocyte NADPH oxidase complex composed of an obligatory core heterodimer formed by the membrane proteins CYBA and CYBB and the cytosolic regulatory subunits NCF1/p47-phox, NCF2/p67-phox, NCF4/p40-phox and the small GTPase RAC1 or RAC2. Interacts with NCF1 (via SH3 domain). Interacts with SH3PXD2A. Interacts with DUOX1, DUOX2 and TPO. Interacts with NOX4; this interaction mediates superoxide generation. Interacts with calprotectin (S100A8/9). Interacts with GBP7. Interacts with NOXO1. Forms a heterodimer with NOX3 and is essential for activity and cell membrane localization of NOX3. Interacts with NOX1. Phosphorylation at Thr-147 enhances NADPH oxidase activity by promoting NCF1/p47-phox binding. Post-translationally, ubiquitinated at Lys-149 likely by RNF145. As to expression, expressed to a relatively high level in kidney, spleen, thymus and lung, and to a lower level in aorta, adrenals, and heart. Expression is not detected in liver or brain.

Its subcellular location is the cell membrane. In terms of biological role, subunit of NADPH oxidase complexes that is required for the NADPH oxidase activity that generates, in various cell types, superoxide from molecular oxygen utilizing NADPH as an electron donor. Subunit of the phagocyte NADPH oxidase complex that mediates the transfer of electrons from cytosolic NADPH to O2 to produce the superoxide anion (O2(-)). In the activated complex, electrons are first transferred from NADPH to flavin adenine dinucleotide (FAD) and subsequently transferred via two heme molecules to molecular oxygen, producing superoxide through an outer-sphere reaction. Activation of the NADPH oxidase complex is initiated by the assembly of cytosolic subunits of the NADPH oxidase complex with the core NADPH oxidase complex to form a complex at the plasma membrane or phagosomal membrane. This activation process is initiated by phosphorylation dependent binding of the cytosolic NCF1/p47-phox subunit to the C-terminus of CYBA/p22-phox. Aassociates with NOX3 to form a functional NADPH oxidase constitutively generating superoxide. In Rattus norvegicus (Rat), this protein is Cytochrome b-245 light chain.